A 167-amino-acid chain; its full sequence is Putative ripening-related protein 6 (167 aa).

The first 23 residues, 1–23 (MANAKQLALFAMLVLLLASCAAA), serve as a signal peptide directing secretion. The tract at residues 28-57 (KPDPCDGGGGGVDSHLPPGMRRCSSPAVSE) is disordered.

Belongs to the kiwellin family.

The protein localises to the secreted. The sequence is that of Putative ripening-related protein 6 from Oryza sativa subsp. japonica (Rice).